Reading from the N-terminus, the 104-residue chain is Large ribosomal subunit protein uL24 (104 aa).

This sequence belongs to the universal ribosomal protein uL24 family. In terms of assembly, part of the 50S ribosomal subunit.

Functionally, one of two assembly initiator proteins, it binds directly to the 5'-end of the 23S rRNA, where it nucleates assembly of the 50S subunit. In terms of biological role, one of the proteins that surrounds the polypeptide exit tunnel on the outside of the subunit. The chain is Large ribosomal subunit protein uL24 from Serratia proteamaculans (strain 568).